A 267-amino-acid chain; its full sequence is uncharacterized protein (267 aa).

A WD repeat occupies 50–90 (PGLNAVTASKFSPDGRWLLNIADGSGYVQLWDTAKGERVKT).

This is an uncharacterized protein from Deinococcus radiodurans (strain ATCC 13939 / DSM 20539 / JCM 16871 / CCUG 27074 / LMG 4051 / NBRC 15346 / NCIMB 9279 / VKM B-1422 / R1).